Consider the following 183-residue polypeptide: Acireductone dioxygenase (183 aa).

His-95, His-97, Glu-101, and His-139 together coordinate Fe(2+). Ni(2+)-binding residues include His-95, His-97, Glu-101, and His-139.

The protein belongs to the acireductone dioxygenase (ARD) family. As to quaternary structure, monomer. The cofactor is Fe(2+). Ni(2+) is required as a cofactor.

It carries out the reaction 1,2-dihydroxy-5-(methylsulfanyl)pent-1-en-3-one + O2 = 3-(methylsulfanyl)propanoate + CO + formate + 2 H(+). The enzyme catalyses 1,2-dihydroxy-5-(methylsulfanyl)pent-1-en-3-one + O2 = 4-methylsulfanyl-2-oxobutanoate + formate + 2 H(+). It functions in the pathway amino-acid biosynthesis; L-methionine biosynthesis via salvage pathway; L-methionine from S-methyl-5-thio-alpha-D-ribose 1-phosphate: step 5/6. Its function is as follows. Catalyzes 2 different reactions between oxygen and the acireductone 1,2-dihydroxy-3-keto-5-methylthiopentene (DHK-MTPene) depending upon the metal bound in the active site. Fe-containing acireductone dioxygenase (Fe-ARD) produces formate and 2-keto-4-methylthiobutyrate (KMTB), the alpha-ketoacid precursor of methionine in the methionine recycle pathway. Ni-containing acireductone dioxygenase (Ni-ARD) produces methylthiopropionate, carbon monoxide and formate, and does not lie on the methionine recycle pathway. The sequence is that of Acireductone dioxygenase from Aquifex aeolicus (strain VF5).